Consider the following 335-residue polypeptide: MTRTANEFLTPQAIKVEAVSGTSAKVILEPLERGFGHTLGNALRRILLSSLPGAAVVEVEIEGVEHEYSTLEGLQQDIVELLLNLKGLSIKLFDQNEAYLTLEKQGPGDITAADLRLPHNVEVVNPEHLIGTLSASGSIKMRLKVSQGRGYETSDSRFPEGETRPVGRLQLDASYSPIKRVSYTVENARVEQRTDLDKLVIDLETNGTVDPEEAIRKAATILQQQIAIFVDLQKDQAPVAQEPREEVDPILLRPVDDLELTVRSANCLKAENIYYIGDLVQRTEVELLKTPNLGKKSLTEIKDVLASKGLQLGMRLENWPPASLRMDDRFAYRSR.

The interval 1–233 (MTRTANEFLT…QQIAIFVDLQ (233 aa)) is alpha N-terminal domain (alpha-NTD). The alpha C-terminal domain (alpha-CTD) stretch occupies residues 247–335 (VDPILLRPVD…MDDRFAYRSR (89 aa)).

It belongs to the RNA polymerase alpha chain family. As to quaternary structure, homodimer. The RNAP catalytic core consists of 2 alpha, 1 beta, 1 beta' and 1 omega subunit. When a sigma factor is associated with the core the holoenzyme is formed, which can initiate transcription.

The enzyme catalyses RNA(n) + a ribonucleoside 5'-triphosphate = RNA(n+1) + diphosphate. DNA-dependent RNA polymerase catalyzes the transcription of DNA into RNA using the four ribonucleoside triphosphates as substrates. This is DNA-directed RNA polymerase subunit alpha from Acinetobacter baylyi (strain ATCC 33305 / BD413 / ADP1).